Reading from the N-terminus, the 745-residue chain is MGVPFFSSLRCMVDLGPCWAGGLTAEMKLLLALAGLLAILATPQPSEGAAPAVLGEVDTSLVLSSMEEAKQLVDKAYKERRESIKQRLRSGSASPMELLSYFKQPVAATRTAVRAADYLHVALDLLERKLRSLWRRPFNVTDVLTPAQLNVLSKSSGCAYQDVGVTCPEQDKYRTITGMCNNRRSPTLGASNRAFVRWLPAEYEDGFSLPYGWTPGVKRNGFPVALARAVSNEIVRFPTDQLTPDQERSLMFMQWGQLLDHDLDFTPEPAARASFVTGVNCETSCVQQPPCFPLKIPPNDPRIKNQADCIPFFRSCPACPGSNITIRNQINALTSFVDASMVYGSEEPLARNLRNMSNQLGLLAVNQRFQDNGRALLPFDNLHDDPCLLTNRSARIPCFLAGDTRSSEMPELTSMHTLLLREHNRLATELKSLNPRWDGERLYQEARKIVGAMVQIITYRDYLPLVLGPTAMRKYLPTYRSYNDSVDPRIANVFTNAFRYGHTLIQPFMFRLDNRYQPMEPNPRVPLSRVFFASWRVVLEGGIDPILRGLMATPAKLNRQNQIAVDEIRERLFEQVMRIGLDLPALNMQRSRDHGLPGYNAWRRFCGLPQPETVGQLGTVLRNLKLARKLMEQYGTPNNIDIWMGGVSEPLKRKGRVGPLLACIIGTQFRKLRDGDRFWWENEGVFSMQQRQALAQISLPRIICDNTGITTVSKNNIFMSNSYPRDFVNCSTLPALNLASWREAS.

An N-terminal signal peptide occupies residues 1–48 (MGVPFFSSLRCMVDLGPCWAGGLTAEMKLLLALAGLLAILATPQPSEG). An N-linked (GlcNAc...) asparagine glycan is attached at N139. Cysteines 167 and 180 form a disulfide. A heme b-binding site is contributed by D260. The active-site Proton acceptor is H261. D262 serves as a coordination point for Ca(2+). 2 disulfide bridges follow: C281–C291 and C285–C309. C316 carries the post-translational modification Cysteine sulfenic acid (-SOH). N323 is a glycosylation site (N-linked (GlcNAc...) asparagine). Ca(2+) contacts are provided by T334, F336, D338, and S340. N-linked (GlcNAc...) asparagine glycans are attached at residues N355 and N391. Residues C387 and C398 are joined by a disulfide bond. The heme b site is built by E408 and M409. The N-linked (GlcNAc...) asparagine glycan is linked to N483. H502 is a binding site for heme b. 2 cysteine pairs are disulfide-bonded: C606/C663 and C704/C730. An N-linked (GlcNAc...) asparagine glycan is attached at N729.

Belongs to the peroxidase family. XPO subfamily. Homodimer; disulfide-linked. Each monomer consists of a light and a heavy chain. Found in a complex with CP and LTF; interacts directly with CP, which protects CP antioxidant properties by MPO. The cofactor is Ca(2+). Heme b serves as cofactor.

It localises to the lysosome. The enzyme catalyses chloride + H2O2 + H(+) = hypochlorous acid + H2O. In terms of biological role, part of the host defense system of polymorphonuclear leukocytes. It is responsible for microbicidal activity against a wide range of organisms. In the stimulated PMN, MPO catalyzes the production of hypohalous acids, primarily hypochlorous acid in physiologic situations, and other toxic intermediates that greatly enhance PMN microbicidal activity. Mediates the proteolytic cleavage of alpha-1-microglobulin to form t-alpha-1-microglobulin, which potently inhibits oxidation of low-density lipoprotein particles and limits vascular damage. The sequence is that of Myeloperoxidase from Homo sapiens (Human).